The following is a 678-amino-acid chain: uncharacterized protein (678 aa).

The next 8 helical transmembrane spans lie at 228-250 (FFVILILGAVITLLLSLAIFSFL), 263-285 (LAMWWLPAILGVLSVCSVFVATQ), 300-322 (STGALPLLALIVKHSIAIALSCV), 334-356 (MLHNGFIGGYLASTLCLLYAVLF), 361-380 (FSLSAVFALEYALSLVFFSA), 387-405 (RIMLAMMFLLFAPFLYAYL), 420-439 (NVFFALGCVPFMLFMLTLFF), and 455-477 (NLLLSGALLTVLVINGVLWSVSL). The tract at residues 653 to 678 (PSSQGVHATPEKNACIRDETVPNLQE) is disordered.

The protein localises to the cell membrane. This is an uncharacterized protein from Treponema pallidum (strain Nichols).